Consider the following 484-residue polypeptide: uncharacterized protein (484 aa).

Residues 25–45 (PLSLFVVLAAVPLPIYFSGLL) form a helical membrane-spanning segment. Positions 384–419 (LSFEETKELWVRADLDGNGVFDYEELKKIWNMTMVN) constitute an EF-hand domain. Ca(2+) contacts are provided by aspartate 397, aspartate 399, asparagine 401, and glutamate 408.

The protein resides in the membrane. This is an uncharacterized protein from Arabidopsis thaliana (Mouse-ear cress).